A 530-amino-acid chain; its full sequence is Ubiquitin carboxyl-terminal hydrolase 17-like protein 24 (530 aa).

The region spanning 80 to 375 (AGLQNMGNTC…QAYVLFYIQK (296 aa)) is the USP domain. Residue Cys-89 is the Nucleophile of the active site. His-334 (proton acceptor) is an active-site residue. Composition is skewed to basic and acidic residues over residues 382-392 (SESVSRGREPR) and 398-412 (DTDR…KRDH). Disordered regions lie at residues 382–412 (SESV…KRDH) and 477–530 (NHHP…LVCQ). Polar residues predominate over residues 493–505 (TPTHQESMNTGTL). The span at 510 to 524 (GRARRSKGKNKHSKR) shows a compositional bias: basic residues.

It belongs to the peptidase C19 family. USP17 subfamily. Expressed in heart, brain, liver and skeletal muscle.

The protein localises to the nucleus. The protein resides in the nucleolus. Its subcellular location is the endoplasmic reticulum. It carries out the reaction Thiol-dependent hydrolysis of ester, thioester, amide, peptide and isopeptide bonds formed by the C-terminal Gly of ubiquitin (a 76-residue protein attached to proteins as an intracellular targeting signal).. In terms of biological role, deubiquitinating enzyme that removes conjugated ubiquitin from specific proteins to regulate different cellular processes that may include cell proliferation, progression through the cell cycle, apoptosis, cell migration, and the cellular response to viral infection. The sequence is that of Ubiquitin carboxyl-terminal hydrolase 17-like protein 24 (USP17L24) from Homo sapiens (Human).